The following is a 380-amino-acid chain: Cytochrome b (380 aa).

4 helical membrane-spanning segments follow: residues 33 to 53, 77 to 98, 113 to 133, and 178 to 198; these read FGSL…FLAM, WMIR…FLHI, WNIG…GYVL, and FFTL…LHLL. Heme b-binding residues include histidine 83 and histidine 97. Heme b contacts are provided by histidine 182 and histidine 196. Histidine 201 contributes to the a ubiquinone binding site. A run of 4 helical transmembrane segments spans residues 226 to 246, 288 to 308, 320 to 340, and 347 to 367; these read IKDI…TLLS, LGGV…PALH, LSQF…WIGG, and FITI…LLMP.

The protein belongs to the cytochrome b family. The cytochrome bc1 complex contains 11 subunits: 3 respiratory subunits (MT-CYB, CYC1 and UQCRFS1), 2 core proteins (UQCRC1 and UQCRC2) and 6 low-molecular weight proteins (UQCRH/QCR6, UQCRB/QCR7, UQCRQ/QCR8, UQCR10/QCR9, UQCR11/QCR10 and a cleavage product of UQCRFS1). This cytochrome bc1 complex then forms a dimer. The cofactor is heme b.

It localises to the mitochondrion inner membrane. Functionally, component of the ubiquinol-cytochrome c reductase complex (complex III or cytochrome b-c1 complex) that is part of the mitochondrial respiratory chain. The b-c1 complex mediates electron transfer from ubiquinol to cytochrome c. Contributes to the generation of a proton gradient across the mitochondrial membrane that is then used for ATP synthesis. In Pongo pygmaeus (Bornean orangutan), this protein is Cytochrome b (MT-CYB).